The sequence spans 835 residues: Phosphatidylinositol 4-kinase beta (835 aa).

Disordered regions lie at residues 1 to 61 (MGDT…PLDV), 99 to 139 (SSAS…VRRR), and 267 to 341 (PSSQ…PVRL). Low complexity predominate over residues 19 to 59 (SPSTSTTSSLSLPSSPSSGPHPLTSSSPSTSEGLPTSSPPL). The PIK helical domain maps to 59–262 (LDVISEGLGE…GTKLRKLILS (204 aa)). 2 stretches are compositionally biased toward basic and acidic residues: residues 125 to 134 (ISEEEVEPIK) and 267 to 276 (PSSQRIRREV). Residues 277–288 (PQPPPPYPPPLH) are compositionally biased toward pro residues. A compositionally biased stretch (polar residues) spans 311–332 (DATVSISLSSNLKRTASNPKVE). Positions 554-820 (EPWQEKVRRI…MVDGSMRSIT (267 aa)) constitute a PI3K/PI4K catalytic domain. Residues 560–566 (VRRIREG) are G-loop. The catalytic loop stretch occupies residues 687 to 695 (QVKDRHNGN). The segment at 706–730 (HIDFGFILSSSPRNLGFETSAFKLT) is activation loop.

Belongs to the PI3/PI4-kinase family. Type III PI4K subfamily. It depends on Mg(2+) as a cofactor. The cofactor is Mn(2+). In terms of tissue distribution, expressed in the inner ear otic vesicles.

The protein resides in the endomembrane system. Its subcellular location is the mitochondrion outer membrane. It is found in the rough endoplasmic reticulum membrane. It catalyses the reaction a 1,2-diacyl-sn-glycero-3-phospho-(1D-myo-inositol) + ATP = a 1,2-diacyl-sn-glycero-3-phospho-(1D-myo-inositol 4-phosphate) + ADP + H(+). Phosphorylates phosphatidylinositol (PI) in the first committed step in the production of the second messenger inositol-1,4,5,-trisphosphate (PIP). May play an important role the in inner ear development. The protein is Phosphatidylinositol 4-kinase beta (pi4kb) of Danio rerio (Zebrafish).